The primary structure comprises 334 residues: Protein NlpD/LppB homolog (334 aa).

Residues 89–133 (IFYIVKSKDTMYSIAKNSGYNYHELSKFNSIKKPYKIIIGQKIWM) form the LysM domain.

It belongs to the E.coli NlpD/Haemophilus LppB family.

This chain is Protein NlpD/LppB homolog, found in Buchnera aphidicola subsp. Acyrthosiphon pisum (strain APS) (Acyrthosiphon pisum symbiotic bacterium).